The following is a 269-amino-acid chain: Ribosomal RNA large subunit methyltransferase E (269 aa).

5 residues coordinate S-adenosyl-L-methionine: glycine 48, tryptophan 50, aspartate 68, aspartate 86, and aspartate 111. The active-site Proton acceptor is lysine 151. The 59-residue stretch at proline 198 to aspartate 256 folds into the TRAM domain.

Belongs to the class I-like SAM-binding methyltransferase superfamily. RNA methyltransferase RlmE family.

It is found in the cytoplasm. The catalysed reaction is uridine(2552) in 23S rRNA + S-adenosyl-L-methionine = 2'-O-methyluridine(2552) in 23S rRNA + S-adenosyl-L-homocysteine + H(+). Functionally, specifically methylates the uridine in position 2552 of 23S rRNA at the 2'-O position of the ribose in the fully assembled 50S ribosomal subunit. The sequence is that of Ribosomal RNA large subunit methyltransferase E from Halorubrum lacusprofundi (strain ATCC 49239 / DSM 5036 / JCM 8891 / ACAM 34).